The primary structure comprises 159 residues: Transcriptional repressor NrdR (159 aa).

A zinc finger lies at 3 to 34; the sequence is CPFCGSDNTSVKDSRAAEDDTAVRRRRVCESC. One can recognise an ATP-cone domain in the interval 49 to 139; that stretch reads IIVVKRDGKR…VYRDFKDPSD (91 aa).

This sequence belongs to the NrdR family. The cofactor is Zn(2+).

Functionally, negatively regulates transcription of bacterial ribonucleotide reductase nrd genes and operons by binding to NrdR-boxes. In Hyphomonas neptunium (strain ATCC 15444), this protein is Transcriptional repressor NrdR.